A 1076-amino-acid chain; its full sequence is GPI inositol-deacylase A (1076 aa).

A helical transmembrane segment spans residues 3–23 (IATFPALAITALALVLWATVA). N-linked (GlcNAc...) asparagine glycosylation is found at Asn48 and Asn119. Residue Ser240 is part of the active site. N-linked (GlcNAc...) asparagine glycosylation occurs at Asn404. The next 2 membrane-spanning stretches (helical) occupy residues 765-785 (FLGF…LCLL) and 815-835 (WILA…SLLY). Residue Asn849 is glycosylated (N-linked (GlcNAc...) asparagine). 3 helical membrane-spanning segments follow: residues 855–875 (FLGP…HWLL), 877–897 (ILTL…IAPE), and 910–930 (FLLL…VAVL). N-linked (GlcNAc...) asparagine glycans are attached at residues Asn952 and Asn966. 3 helical membrane-spanning segments follow: residues 970–990 (SLLL…VVWL), 1006–1026 (EVSA…GIMI), and 1035–1055 (IYAT…HGVV).

Belongs to the GPI inositol-deacylase family.

The protein resides in the endoplasmic reticulum membrane. In terms of biological role, involved in inositol deacylation of GPI-anchored proteins which plays important roles in the quality control and ER-associated degradation of GPI-anchored proteins. The polypeptide is GPI inositol-deacylase A (BST1A) (Yarrowia lipolytica (strain CLIB 122 / E 150) (Yeast)).